The primary structure comprises 177 residues: Peptide methionine sulfoxide reductase MsrA (177 aa).

The active site involves Cys-15.

The protein belongs to the MsrA Met sulfoxide reductase family.

It carries out the reaction L-methionyl-[protein] + [thioredoxin]-disulfide + H2O = L-methionyl-(S)-S-oxide-[protein] + [thioredoxin]-dithiol. The catalysed reaction is [thioredoxin]-disulfide + L-methionine + H2O = L-methionine (S)-S-oxide + [thioredoxin]-dithiol. Functionally, has an important function as a repair enzyme for proteins that have been inactivated by oxidation. Catalyzes the reversible oxidation-reduction of methionine sulfoxide in proteins to methionine. This is Peptide methionine sulfoxide reductase MsrA from Listeria innocua serovar 6a (strain ATCC BAA-680 / CLIP 11262).